Consider the following 290-residue polypeptide: Alpha-mannosidase (290 aa).

The active-site Nucleophile is the Asp-17. N-linked (GlcNAc...) asparagine glycosylation is present at Asn-64.

It belongs to the glycosyl hydrolase 38 family. As to quaternary structure, dimer. The cofactor is Zn(2+).

The enzyme catalyses Hydrolysis of terminal, non-reducing alpha-D-mannose residues in alpha-D-mannosides.. With respect to regulation, inhibited by swainsonine but not by 1-desoxymannojirimycin. In terms of biological role, liberates mannose from p-nitrophenyl-alpha-D-mannoside. The sequence is that of Alpha-mannosidase from Lablab purpureus (Hyacinth bean).